Here is a 372-residue protein sequence, read N- to C-terminus: Protein phosphatase Mn(2+)-dependent 1K (372 aa).

The transit peptide at 1–29 (MSTAALLTLVRSGGNQVRRRVLLRARGLQ) directs the protein to the mitochondrion. A critical for association with the BCKDH complex region spans residues 46–61 (KWSRFDPDGSGRPATW). The PPM-type phosphatase domain occupies 94–346 (NVGSASQIGK…DNTTAVVVPF (253 aa)). Mn(2+)-binding residues include aspartate 127 and glycine 128. Serine 248 bears the Phosphoserine mark. Mn(2+)-binding residues include aspartate 298 and aspartate 337.

Belongs to the PP2C family. In terms of assembly, monomer. Interacts with E1 and E2 components of the branched-chain alpha-ketoacid dehydrogenase (BCKDH) complex; this interaction requires colocalization in mitochondria. Interacts with BCKDHA but not with BCKDHB of the E1 component. Interacts with the 24-meric E2 core composed of DBT monomers with a 24:1 stoichiometry; the N-terminal region (residues 49-61) of PPM1K and C-terminal linker of the lipoyl domain of DBT (residues 145-160) are critical for this interaction, whereas the lipoyl prosthetic group is dispensable. Competes with BCKDK for binding to the E2 core; this interaction is modulated by branched-chain alpha-keto acids. At steady state, BCKDH holoenzyme preferentially binds BCKDK and BCKDHA is phosphorylated. In response to high levels of branched-chain alpha-keto acids, the inhibitory BCKDK is replaced by activating PPM1K leading to BCKDHA dephosphorylation and BCAA degradation. The cofactor is Mn(2+).

The protein localises to the mitochondrion matrix. The enzyme catalyses O-phospho-L-seryl-[3-methyl-2-oxobutanoate dehydrogenase] + H2O = L-seryl-[3-methyl-2-oxobutanoate dehydrogenase] + phosphate. The catalysed reaction is O-phospho-L-seryl-[protein] + H2O = L-seryl-[protein] + phosphate. It participates in protein modification. Its function is as follows. Serine/threonine-protein phosphatase component of macronutrients metabolism. Forms a functional kinase and phosphatase pair with BCKDK, serving as a metabolic regulatory node that coordinates branched-chain amino acids (BCAAs) with glucose and lipid metabolism via two distinct phosphoprotein targets: mitochondrial BCKDHA subunit of the branched-chain alpha-ketoacid dehydrogenase (BCKDH) complex and cytosolic ACLY, a lipogenic enzyme of Krebs cycle. At high levels of branched-chain ketoacids, dephosphorylates and activates mitochondrial BCKDH complex, a multisubunit complex consisting of three multimeric components each involved in different steps of BCAA catabolism: E1 composed of BCKDHA and BCKDHB, E2 core composed of DBT monomers, and E3 composed of DLD monomers. Tightly associates with the E2 component of BCKDH complex and dephosphorylates BCKDHA on Ser-347. Regulates the reversible phosphorylation of ACLY in response to changes in cellular carbohydrate abundance such as occurs during fasting to feeding metabolic transition. At fasting state, appears to dephosphorylate ACLY on Ser-455 and inactivate it. Refeeding stimulates MLXIPL/ChREBP transcription factor, leading to increased BCKDK to PPM1K expression ratio, phosphorylation and activation of ACLY that ultimately results in the generation of malonyl-CoA and oxaloacetate immediate substrates of de novo lipogenesis and gluconeogenesis, respectively. Recognizes phosphosites having SxS or RxxS motifs and strictly depends on Mn(2+) ions for the phosphatase activity. Regulates Ca(2+)-induced opening of mitochondrial transition pore and apoptotic cell death. The sequence is that of Protein phosphatase Mn(2+)-dependent 1K (PPM1K) from Bos taurus (Bovine).